Here is a 132-residue protein sequence, read N- to C-terminus: Global transcriptional regulator Spx (132 aa).

A disulfide bridge connects residues Cys10 and Cys13.

The protein belongs to the ArsC family. Spx subfamily. In terms of assembly, interacts with the C-terminal domain of the alpha subunit of the RNAP.

Its subcellular location is the cytoplasm. Functionally, global transcriptional regulator that plays a key role in stress response and exerts either positive or negative regulation of genes. Acts by interacting with the C-terminal domain of the alpha subunit of the RNA polymerase (RNAP). This interaction can enhance binding of RNAP to the promoter region of target genes and stimulate their transcription, or block interaction of RNAP with activator. In Enterococcus faecalis (strain ATCC 700802 / V583), this protein is Global transcriptional regulator Spx.